Reading from the N-terminus, the 64-residue chain is Large ribosomal subunit protein bL35 (64 aa).

Over residues 1 to 15 (MPKSKTHSGTAKRFK) the composition is skewed to basic residues. The disordered stretch occupies residues 1–23 (MPKSKTHSGTAKRFKVSGSGKIL).

Belongs to the bacterial ribosomal protein bL35 family.

The protein is Large ribosomal subunit protein bL35 of Rhodococcus jostii (strain RHA1).